Reading from the N-terminus, the 125-residue chain is ATP synthase epsilon chain (125 aa).

Belongs to the ATPase epsilon chain family. As to quaternary structure, F-type ATPases have 2 components, CF(1) - the catalytic core - and CF(0) - the membrane proton channel. CF(1) has five subunits: alpha(3), beta(3), gamma(1), delta(1), epsilon(1). CF(0) has three main subunits: a, b and c.

The protein localises to the cell inner membrane. In terms of biological role, produces ATP from ADP in the presence of a proton gradient across the membrane. The protein is ATP synthase epsilon chain of Aliarcobacter butzleri (strain RM4018) (Arcobacter butzleri).